The chain runs to 291 residues: HTH-type transcriptional activator AmpR (291 aa).

One can recognise an HTH lysR-type domain in the interval 6–63 (LPLNSLRAFEAAARHLSFTHAAIELNVTHSAISQHVKTLEQHLNCQLFVRVSRGLMLT). Positions 23–42 (FTHAAIELNVTHSAISQHVK) form a DNA-binding region, H-T-H motif.

It belongs to the LysR transcriptional regulatory family.

The protein resides in the cytoplasm. In terms of biological role, this protein is a positive regulator of gene expression of cephalosporinase (AmpC). This is HTH-type transcriptional activator AmpR (ampR) from Enterobacter cloacae.